Reading from the N-terminus, the 229-residue chain is Ribonuclease T (229 aa).

One can recognise an Exonuclease domain in the interval 23–197 (VIIDVETAGF…YDTERTAELF (175 aa)). Mg(2+) is bound by residues Asp26, Glu28, His184, and Asp189. His184 acts as the Proton donor/acceptor in catalysis.

The protein belongs to the RNase T family. In terms of assembly, homodimer. It depends on Mg(2+) as a cofactor.

Functionally, trims short 3' overhangs of a variety of RNA species, leaving a one or two nucleotide 3' overhang. Responsible for the end-turnover of tRNA: specifically removes the terminal AMP residue from uncharged tRNA (tRNA-C-C-A). Also appears to be involved in tRNA biosynthesis. This is Ribonuclease T from Haemophilus influenzae (strain PittEE).